A 423-amino-acid polypeptide reads, in one-letter code: Glycine amidinotransferase, mitochondrial (423 aa).

The N-terminal 43 residues, 1–43 (MLRVRCLRGGSRGAEAVHYIGSRLGRTLTGWVQRTFQSTQAAT), are a transit peptide targeting the mitochondrion. Phosphoserine occurs at positions 46 and 49. Position 170 (D170) interacts with arginine. Active-site residues include D254 and H303. Residues D305, R322, S354, and S355 each coordinate arginine. K385 is modified (N6-acetyllysine). Catalysis depends on C407, which acts as the Amidino-cysteine intermediate.

This sequence belongs to the amidinotransferase family. In terms of assembly, homodimer. There is an equilibrium between the monomeric and dimeric forms, shifted towards the side of the monomer. As to expression, expressed in brain, heart, kidney, liver, lung, salivary gland and skeletal muscle tissue, with the highest expression in kidney. Biallelically expressed in placenta and fetal tissues.

It localises to the mitochondrion inner membrane. It is found in the cytoplasm. It carries out the reaction L-arginine + glycine = guanidinoacetate + L-ornithine. The enzyme catalyses 4-aminobutanoate + L-arginine = 4-guanidinobutanoate + L-ornithine. The catalysed reaction is beta-alanine + L-arginine = 3-guanidinopropanoate + L-ornithine. It catalyses the reaction taurine + L-arginine = taurocyamine + L-ornithine. It functions in the pathway amine and polyamine biosynthesis; creatine biosynthesis; creatine from L-arginine and glycine: step 1/2. Transamidinase that catalyzes the transfer of the amidino group of L-arginine onto the amino moiety of acceptor metabolites such as glycine, beta-alanine, gamma-aminobutyric acid (GABA) and taurine yielding the corresponding guanidine derivatives. Catalyzes the rate-limiting step of creatine biosynthesis, namely the transfer of the amidino group from L-arginine to glycine to generate guanidinoacetate, which is then methylated by GAMT to form creatine. Provides creatine as a source for ATP generation in tissues with high energy demands, in particular skeletal muscle, heart and brain. The sequence is that of Glycine amidinotransferase, mitochondrial (GATM) from Homo sapiens (Human).